Reading from the N-terminus, the 119-residue chain is Beta-2-microglobulin (119 aa).

The N-terminal stretch at 1-20 (MARSVVAALLVLLSLSGLEA) is a signal peptide. An Ig-like C1-type domain is found at 25-114 (PKIQVYSRHP…VTFPTPKTVK (90 aa)). C45 and C100 are disulfide-bonded.

The protein belongs to the beta-2-microglobulin family. As to quaternary structure, heterodimer of an alpha chain and a beta chain. Beta-2-microglobulin is the beta-chain of major histocompatibility complex class I molecules.

It is found in the secreted. Component of the class I major histocompatibility complex (MHC). Involved in the presentation of peptide antigens to the immune system. In Saimiri boliviensis boliviensis (Bolivian squirrel monkey), this protein is Beta-2-microglobulin (B2M).